A 401-amino-acid polypeptide reads, in one-letter code: 8-amino-7-oxononanoate synthase (401 aa).

Arg24 is a binding site for substrate. 111–112 (GF) is a binding site for pyridoxal 5'-phosphate. Residue His137 coordinates substrate. Residues Ser183, His211, and Thr240 each coordinate pyridoxal 5'-phosphate. At Lys243 the chain carries N6-(pyridoxal phosphate)lysine. Thr357 lines the substrate pocket.

Belongs to the class-II pyridoxal-phosphate-dependent aminotransferase family. BioF subfamily. In terms of assembly, homodimer. Requires pyridoxal 5'-phosphate as cofactor.

The enzyme catalyses 6-carboxyhexanoyl-[ACP] + L-alanine + H(+) = (8S)-8-amino-7-oxononanoate + holo-[ACP] + CO2. It participates in cofactor biosynthesis; biotin biosynthesis. In terms of biological role, catalyzes the decarboxylative condensation of pimeloyl-[acyl-carrier protein] and L-alanine to produce 8-amino-7-oxononanoate (AON), [acyl-carrier protein], and carbon dioxide. This Xanthomonas oryzae pv. oryzae (strain MAFF 311018) protein is 8-amino-7-oxononanoate synthase.